A 713-amino-acid polypeptide reads, in one-letter code: Serine/threonine-protein kinase SSN3 (713 aa).

A Protein kinase domain is found at 66-484 (YTILGFLSSG…ANQALEHAWF (419 aa)). 72–80 (LSSGTYGRV) lines the ATP pocket. Residues 104–120 (NAGTGSGTATVGSGAST) are compositionally biased toward low complexity. The segment at 104 to 188 (NAGTGSGTAT…GGSDNTLQLS (85 aa)) is disordered. Residues 129-142 (QQHQLLDSPSSSLH) show a composition bias toward polar residues. The segment covering 158–175 (GTPSASPSLSASLGTSTA) has biased composition (low complexity). An ATP-binding site is contributed by lysine 201. Aspartate 304 serves as the catalytic Proton acceptor. Over residues 657–672 (SNPATVRSSHSIGSTE) the composition is skewed to polar residues. Residues 657–713 (SNPATVRSSHSIGSTESITPTTSSQPIPAQPSSAPLARTTNLVATATRNQQRKRQRN) form a disordered region. A compositionally biased stretch (low complexity) spans 673–691 (SITPTTSSQPIPAQPSSAP). Polar residues predominate over residues 694–705 (RTTNLVATATRN).

This sequence belongs to the protein kinase superfamily. CMGC Ser/Thr protein kinase family. CDC2/CDKX subfamily. In terms of assembly, component of the srb8-11 complex, a regulatory module of the Mediator complex. Requires Mg(2+) as cofactor.

The protein resides in the nucleus. The enzyme catalyses L-seryl-[protein] + ATP = O-phospho-L-seryl-[protein] + ADP + H(+). It catalyses the reaction L-threonyl-[protein] + ATP = O-phospho-L-threonyl-[protein] + ADP + H(+). It carries out the reaction [DNA-directed RNA polymerase] + ATP = phospho-[DNA-directed RNA polymerase] + ADP + H(+). Its function is as follows. Component of the srb8-11 complex. The srb8-11 complex is a regulatory module of the Mediator complex which is itself dependent transcription. The srb8-11 complex may be involved in the transcriptional repression of a subset of genes regulated by Mediator. It may inhibit the association of the Mediator complex with RNA polymerase II to form the holoenzyme complex. The srb8-11 complex phosphorylates the C-terminal domain (CTD) of the largest subunit of RNA polymerase II. This Mycosarcoma maydis (Corn smut fungus) protein is Serine/threonine-protein kinase SSN3 (SSN3).